A 257-amino-acid polypeptide reads, in one-letter code: 3-dehydroquinate dehydratase (257 aa).

Residues 50–52 (EWR) and arginine 86 each bind 3-dehydroquinate. Histidine 147 acts as the Proton donor/acceptor in catalysis. Lysine 174 functions as the Schiff-base intermediate with substrate in the catalytic mechanism. 3-dehydroquinate contacts are provided by arginine 216, serine 235, and glutamine 239.

Belongs to the type-I 3-dehydroquinase family. Homodimer.

The enzyme catalyses 3-dehydroquinate = 3-dehydroshikimate + H2O. Its pathway is metabolic intermediate biosynthesis; chorismate biosynthesis; chorismate from D-erythrose 4-phosphate and phosphoenolpyruvate: step 3/7. In terms of biological role, involved in the third step of the chorismate pathway, which leads to the biosynthesis of aromatic amino acids. Catalyzes the cis-dehydration of 3-dehydroquinate (DHQ) and introduces the first double bond of the aromatic ring to yield 3-dehydroshikimate. The chain is 3-dehydroquinate dehydratase from Geobacillus thermodenitrificans (strain NG80-2).